The following is a 152-amino-acid chain: Cyanate hydratase (152 aa).

Residues Arg-98, Glu-101, and Ser-124 contribute to the active site.

This sequence belongs to the cyanase family.

It carries out the reaction cyanate + hydrogencarbonate + 3 H(+) = NH4(+) + 2 CO2. Its function is as follows. Catalyzes the reaction of cyanate with bicarbonate to produce ammonia and carbon dioxide. This Uncinocarpus reesii (strain UAMH 1704) protein is Cyanate hydratase.